The primary structure comprises 203 residues: Ras-related protein Rab-13 (203 aa).

Serine 17, glycine 18, glycine 20, lysine 21, threonine 22, cysteine 23, and threonine 40 together coordinate GTP. Threonine 22 contacts Mg(2+). The Switch 1 signature appears at 31-45; the sequence is DNFNNTYISTIGIDF. Threonine 40 is a Mg(2+) binding site. Glycyl lysine isopeptide (Lys-Gly) (interchain with G-Cter in ubiquitin) cross-links involve residues lysine 46 and lysine 58. Residue aspartate 63 coordinates Mg(2+). The Switch 2 motif lies at 63-80; sequence DTAGQERFKTITTAYYRG. 6 residues coordinate GTP: glycine 66, asparagine 121, lysine 122, aspartate 124, alanine 152, and lysine 153. The interval 173–203 is disordered; it reads SGGRRSGNHSKPSSTDLKPSDKKNTNKCSLG. A Phosphoserine modification is found at serine 178. Cysteine 200 carries the post-translational modification Cysteine methyl ester. The S-geranylgeranyl cysteine moiety is linked to residue cysteine 200. Residues 201–203 constitute a propeptide, removed in mature form; the sequence is SLG.

Belongs to the small GTPase superfamily. Rab family. Interacts (GTP-bound form) with MICALL2; competes with RAB8A and is involved in tight junctions assembly. Interacts (GTP-bound form) with MICALL1. Interacts (GTP-bound form) with MICAL1, MICAL3, MICALCL, EHBP1 and EHBP1L1; ternary complexes of RAB8A, RAB13 and either MICAL1 or EHBP1L1 are possible. Interacts with PRKACA; downstream effector of RAB13 involved in tight junction assembly. Interacts with GRB2; may recruit RAB13 to the leading edge of migrating endothelial cells where it can activate RHOA. Interacts (isoprenylated form) with PDE6D; dissociates RAB13 from membranes. Interacts with BICDL2/BICDR2. Interacts with LEPROT and LEPROTL1. It depends on Mg(2+) as a cofactor. Post-translationally, ubiquitinated via 'Lys-11'-linked ubiquitination on Lys-46 and Lys-58; impairing the recruitment of guanosine diphosphate (GDP) dissociation inhibitor 1/GDI1.

Its subcellular location is the cell membrane. It is found in the cytoplasmic vesicle membrane. The protein resides in the cell junction. It localises to the tight junction. The protein localises to the golgi apparatus. Its subcellular location is the trans-Golgi network membrane. It is found in the recycling endosome membrane. The protein resides in the cell projection. It localises to the lamellipodium. It carries out the reaction GTP + H2O = GDP + phosphate + H(+). With respect to regulation, regulated by guanine nucleotide exchange factors (GEFs) including DENND1C, which promote the exchange of bound GDP for free GTP. Regulated by GTPase activating proteins (GAPs) which increase the GTP hydrolysis activity. Inhibited by GDP dissociation inhibitors (GDIs). Activated in response to insulin. In terms of biological role, the small GTPases Rab are key regulators of intracellular membrane trafficking, from the formation of transport vesicles to their fusion with membranes. Rabs cycle between an inactive GDP-bound form and an active GTP-bound form that is able to recruit to membranes different sets of downstream effectors directly responsible for vesicle formation, movement, tethering and fusion. RAB13 is involved in endocytic recycling and regulates the transport to the plasma membrane of transmembrane proteins like the tight junction protein OCLN/occludin. Thereby, it regulates the assembly and the activity of tight junctions. Moreover, it may also regulate tight junction assembly by activating the PKA signaling pathway and by reorganizing the actin cytoskeleton through the activation of the downstream effectors PRKACA and MICALL2 respectively. Through its role in tight junction assembly, may play a role in the establishment of Sertoli cell barrier. Plays also a role in angiogenesis through regulation of endothelial cells chemotaxis. Also involved in neurite outgrowth. Has also been proposed to play a role in post-Golgi membrane trafficking from the TGN to the recycling endosome. Finally, it has been involved in insulin-induced transport to the plasma membrane of the glucose transporter GLUT4 and therefore may play a role in glucose homeostasis. This Mesocricetus auratus (Golden hamster) protein is Ras-related protein Rab-13 (RAB13).